We begin with the raw amino-acid sequence, 193 residues long: Bcl-2-binding component 3 (193 aa).

Disordered regions lie at residues 1-32 and 71-131; these read MARARQEGSSPEPVEGLARDSPRPFPLGRLMP and ALGG…VEEE. Residue Ser10 is modified to Phosphoserine. The short motif at 137–151 is the BH3 element; sequence IGAQLRRMADDLNAQ.

The protein belongs to the Bcl-2 family. In terms of assembly, interacts with MCL1 and BCL2A1. Interacts (via BH3 domain) with BCL2 and BCL2L1/BCL-XL. Interacts (via BH3 domain) with NOL3/ARC (via CARD domain); this interaction prevents BBC3 association with BCL2 and results in CASP8 activation.

It localises to the mitochondrion. In terms of biological role, essential mediator of p53/TP53-dependent and p53/TP53-independent apoptosis. Promotes partial unfolding of BCL2L1 and dissociation of BCL2L1 from p53/TP53, releasing the bound p53/TP53 to induce apoptosis. Regulates ER stress-induced neuronal apoptosis. This chain is Bcl-2-binding component 3 (Bbc3), found in Rattus norvegicus (Rat).